The primary structure comprises 158 residues: Curculin-2 (158 aa).

Residues 1–22 (MAAKFLLTILVTFAAVASLGMA) form the signal peptide. In terms of domain architecture, Bulb-type lectin spans 23–131 (DSVLLSGQTL…VLWPLGLNGC (109 aa)). Cys51 and Cys74 are joined by a disulfide. N-linked (GlcNAc...) asparagine glycosylation occurs at Asn103. A propeptide spanning residues 136 to 158 (GEITVAKDSTEPQHEDIKMVINN) is cleaved from the precursor.

Heterodimer with curculin-1; Disulfide-linked.

In terms of biological role, taste-modifying protein; sweet-tasting. After curculin, water elicits a sweet taste, and sour substances induce a stronger sense of sweetness. The protein is Curculin-2 of Molineria latifolia (Lumbah).